We begin with the raw amino-acid sequence, 558 residues long: Polysialic acid transport protein KpsD (558 aa).

Positions 1-20 (MKLFKSILLIAACHAAQASA) are cleaved as a signal peptide.

It to E.coli K5 KpsD.

It localises to the periplasm. In terms of biological role, involved in the translocation of the polysialic acid capsule across the outer membrane to the cell surface. May function as the periplasmic binding element of the PSA transport system, in which it transiently interacts with the membrane component of the transporter, binds polysaccharide and transports the polymer to a component in the outer membrane. This Escherichia coli protein is Polysialic acid transport protein KpsD (kpsD).